A 276-amino-acid chain; its full sequence is N-acetylmuramoyl-L-alanine amidase AmiD (276 aa).

An N-terminal signal peptide occupies residues Met-1–Gly-16. Residue Cys-17 is the site of N-palmitoyl cysteine attachment. Cys-17 carries S-diacylglycerol cysteine lipidation. The N-acetylmuramoyl-L-alanine amidase domain occupies Pro-42–Pro-179. Residue His-50 coordinates Zn(2+). Tyr-51–Thr-52 is a binding site for substrate. Glu-119 acts as the Proton acceptor in catalysis. His-166 and Asp-176 together coordinate Zn(2+).

Belongs to the N-acetylmuramoyl-L-alanine amidase 2 family. Zn(2+) serves as cofactor.

The protein resides in the cell outer membrane. It catalyses the reaction Hydrolyzes the link between N-acetylmuramoyl residues and L-amino acid residues in certain cell-wall glycopeptides.. In Escherichia coli (strain K12), this protein is N-acetylmuramoyl-L-alanine amidase AmiD (amiD).